The following is a 206-amino-acid chain: Delta and osm-11 homolog protein 1 (206 aa).

The chain is Delta and osm-11 homolog protein 1 (dos-1) from Caenorhabditis elegans.